Reading from the N-terminus, the 399-residue chain is Exodeoxyribonuclease 7 large subunit (399 aa).

This sequence belongs to the XseA family. In terms of assembly, heterooligomer composed of large and small subunits.

The protein localises to the cytoplasm. The catalysed reaction is Exonucleolytic cleavage in either 5'- to 3'- or 3'- to 5'-direction to yield nucleoside 5'-phosphates.. In terms of biological role, bidirectionally degrades single-stranded DNA into large acid-insoluble oligonucleotides, which are then degraded further into small acid-soluble oligonucleotides. The protein is Exodeoxyribonuclease 7 large subunit of Clostridium beijerinckii (strain ATCC 51743 / NCIMB 8052) (Clostridium acetobutylicum).